Here is a 552-residue protein sequence, read N- to C-terminus: Capsid protein precursor (552 aa).

Positions 1 to 41 (MKQNDTKKTTQRRNSKKYSSKTNRGTKRAPRDQEVGTGAQE) are disordered. The segment covering 9–28 (TTQRRNSKKYSSKTNRGTKR) has biased composition (basic residues).

In terms of assembly, homodimer. Post-translationally, the 7 kDa polypeptide is acetylated. Autocatalytic proteolysis releases a post-translationally modified peptide that remains associated with nucleic acid within the virion. This peptide is observed only when nucleic acid is packaged in the capsid.

The protein resides in the virion. The capsid protein self-assembles to form an icosahedral capsid with a T=2 symmetry made of 120 subunits. This Human picobirnavirus (strain Human/Thailand/Hy005102/-) (PBV) protein is Capsid protein precursor (Segment-1).